A 279-amino-acid chain; its full sequence is Shikimate dehydrogenase (NADP(+)) (279 aa).

Shikimate contacts are provided by residues 18–20 and threonine 64; that span reads SRS. Catalysis depends on lysine 68, which acts as the Proton acceptor. Glutamate 80 is a binding site for NADP(+). Shikimate is bound by residues asparagine 89 and aspartate 104. NADP(+)-binding positions include 129–133, 153–158, and isoleucine 218; these read GAGGA and NRTVSR. Tyrosine 220 is a shikimate binding site. Glycine 241 contributes to the NADP(+) binding site.

This sequence belongs to the shikimate dehydrogenase family. In terms of assembly, homodimer.

It carries out the reaction shikimate + NADP(+) = 3-dehydroshikimate + NADPH + H(+). It functions in the pathway metabolic intermediate biosynthesis; chorismate biosynthesis; chorismate from D-erythrose 4-phosphate and phosphoenolpyruvate: step 4/7. Functionally, involved in the biosynthesis of the chorismate, which leads to the biosynthesis of aromatic amino acids. Catalyzes the reversible NADPH linked reduction of 3-dehydroshikimate (DHSA) to yield shikimate (SA). This is Shikimate dehydrogenase (NADP(+)) from Chelativorans sp. (strain BNC1).